Consider the following 541-residue polypeptide: Tegument protein UL21 homolog (541 aa).

This sequence belongs to the alphaherpesvirinae UL21 protein family. In terms of assembly, interacts (via C-terminus) with UL16.

It is found in the virion tegument. The protein localises to the host cytoplasm. Its subcellular location is the host nucleus. Functionally, may participate in DNA packaging/capsid maturation events. Promotes efficient incorporation of tegument proteins UL46, UL49, and US3 homologs into virions. May also play a role in capsid transport to the trans-Golgi network (TGN). This is Tegument protein UL21 homolog from Homo sapiens (Human).